A 51-amino-acid polypeptide reads, in one-letter code: Large ribosomal subunit protein eL39-like (51 aa).

The protein belongs to the eukaryotic ribosomal protein eL39 family. In terms of assembly, component of a male germ cell-specific 60S large ribosomal subunit (LSU), which contains RPL10L and RPL39L, instead of RPL10 and RPL39 paralogs. The composition of the rest of the complex is similar to classical ribosomes. In terms of tissue distribution, highly expressed in spermatocytes and spermatids. Highly expressed in embryonic stem cells.

The protein localises to the cytoplasm. Functionally, male germ cell-specific component of the ribosome, which is required for the formation of sperm and male fertility. Replaces the RPL39 paralog in the ribosome of male germ cells. The ribosome is a large ribonucleoprotein complex responsible for the synthesis of proteins in the cell. The male germ cell-specific ribosome displays a ribosomal polypeptide exit tunnel of distinct size and charge states compared with the classical ribosome. It is responsible for regulating the biosynthesis and folding of a subset of male germ-cell-specific proteins that are essential for the formation of sperm. This Mus musculus (Mouse) protein is Large ribosomal subunit protein eL39-like.